We begin with the raw amino-acid sequence, 221 residues long: MGIQEKTLGIRKERKLVVVPRERNHVRHASQRTRSKNYKNISKKRAQQHAFGFNIAKTLAKIQAFVWGSPADEEEESVVPLSKNSQDCVPLQWQAKFAQLRQQLHSTQKELQFVKEKCHLLQSVLDDANIDQRYLESRRDMKNIERDNLKPTENLPPSPVRAVNPLVTSSPIHMSPLQSRQRPVSSLQPPKGPNFYAKYPKLPQTNILRESPTEDSVPHAE.

Residues 142–221 (KNIERDNLKP…PTEDSVPHAE (80 aa)) form a disordered region. Phosphoserine occurs at positions 158, 170, and 175. Residues 165–170 (PLVTSS) carry the CDC5-binding motif. Over residues 166–188 (LVTSSPIHMSPLQSRQRPVSSLQ) the composition is skewed to polar residues. The short motif at 189–195 (PPKGPNF) is the CLB3-docking element. The CDC14-binding motif lies at 200–202 (PKL).

Interacts with CDC5 and CDC14. Phosphorylated by CLB3-CDK1 in metaphase which is required for correct localization at the nuclear envelop and the spindle pole body, and dephosphorylated by CDC14 in early anaphase.

The protein resides in the nucleus membrane. It localises to the cytoplasm. It is found in the cytoskeleton. The protein localises to the microtubule organizing center. Its subcellular location is the spindle pole body. Specialized component of the nuclear membrane that may be involved in the connection of the spindle pole body (SPB) to the nuclear envelope. Recruits CDC5 to spindle pole bodies in metaphase. The polypeptide is CDC5 pindle pole body anchor protein 1 (Saccharomyces cerevisiae (strain ATCC 204508 / S288c) (Baker's yeast)).